The primary structure comprises 211 residues: Mitotic spindle assembly checkpoint protein MAD2B (211 aa).

The 191-residue stretch at 13–203 (QVVADVLSEF…SDILKMQLYV (191 aa)) folds into the HORMA domain.

As to quaternary structure, homooligomer. Interacts with REV1. Interacts with FZR1 (in complex with the anaphase promoting complex APC). May interact with CDC20. Heterodimer with REV3L. This dimer forms the minimal DNA polymerase zeta complex (Pol-zeta2), with REV3L bearing DNA polymerase catalytic activity, although its activity is very low in this context. Component of the tetrameric Pol-zeta complex (Pol-zeta4), which consists of REV3L, MAD2L2, POLD2 and POLD3; Pol-zeta4 is the fully active form of DNA polymerase zeta. Component of the shieldin complex, consisting of SHLD1, SHLD2, SHLD3 and MAD2L2/REV7. Within the complex, SHLD2 forms a scaffold which interacts with a SHLD3-MAD2L2 subcomplex via its N-terminus, and with SHLD1 via its C-terminus.

Its subcellular location is the nucleus. The protein resides in the cytoplasm. The protein localises to the cytoskeleton. It localises to the spindle. It is found in the chromosome. Its function is as follows. Adapter protein able to interact with different proteins and involved in different biological processes. Mediates the interaction between the error-prone DNA polymerase zeta catalytic subunit REV3L and the inserter polymerase REV1, thereby mediating the second polymerase switching in translesion DNA synthesis. Translesion DNA synthesis releases the replication blockade of replicative polymerases, stalled in presence of DNA lesions. May also play a role in signal transduction in response to DNA damage. May regulate the activation of the anaphase promoting complex APC thereby regulating progression through the cell cycle. Component of the shieldin complex, which plays an important role in repair of DNA double-stranded breaks (DSBs). During G1 and S phase of the cell cycle, the complex functions downstream of TP53BP1 to promote non-homologous end joining (NHEJ) and suppress DNA end resection. Through transcriptional regulation may play a role in epithelial-mesenchymal transdifferentiation. In Gallus gallus (Chicken), this protein is Mitotic spindle assembly checkpoint protein MAD2B (MAD2L2).